The primary structure comprises 339 residues: Ketol-acid reductoisomerase (NADP(+)) (339 aa).

The region spanning 1 to 182 (MRVYYDRDAD…GGGRSGVIET (182 aa)) is the KARI N-terminal Rossmann domain. NADP(+)-binding positions include 24-27 (YGSQ), Arg48, Ser51, Thr53, and 83-86 (DELQ). Residue His108 is part of the active site. Gly134 contributes to the NADP(+) binding site. The KARI C-terminal knotted domain occupies 183-328 (TFKEECETDL…GKLRAMMPWI (146 aa)). 4 residues coordinate Mg(2+): Asp191, Glu195, Glu227, and Glu231. Ser252 serves as a coordination point for substrate.

The protein belongs to the ketol-acid reductoisomerase family. Mg(2+) serves as cofactor.

The catalysed reaction is (2R)-2,3-dihydroxy-3-methylbutanoate + NADP(+) = (2S)-2-acetolactate + NADPH + H(+). The enzyme catalyses (2R,3R)-2,3-dihydroxy-3-methylpentanoate + NADP(+) = (S)-2-ethyl-2-hydroxy-3-oxobutanoate + NADPH + H(+). The protein operates within amino-acid biosynthesis; L-isoleucine biosynthesis; L-isoleucine from 2-oxobutanoate: step 2/4. It functions in the pathway amino-acid biosynthesis; L-valine biosynthesis; L-valine from pyruvate: step 2/4. Involved in the biosynthesis of branched-chain amino acids (BCAA). Catalyzes an alkyl-migration followed by a ketol-acid reduction of (S)-2-acetolactate (S2AL) to yield (R)-2,3-dihydroxy-isovalerate. In the isomerase reaction, S2AL is rearranged via a Mg-dependent methyl migration to produce 3-hydroxy-3-methyl-2-ketobutyrate (HMKB). In the reductase reaction, this 2-ketoacid undergoes a metal-dependent reduction by NADPH to yield (R)-2,3-dihydroxy-isovalerate. The chain is Ketol-acid reductoisomerase (NADP(+)) from Brucella abortus (strain S19).